A 247-amino-acid polypeptide reads, in one-letter code: Glucosamine-6-phosphate deaminase (247 aa).

Asp67 (proton acceptor; for enolization step) is an active-site residue. Residue Asn136 is the For ring-opening step of the active site. Residue His138 is the Proton acceptor; for ring-opening step of the active site. The active-site For ring-opening step is Glu143.

Belongs to the glucosamine/galactosamine-6-phosphate isomerase family. NagB subfamily.

It carries out the reaction alpha-D-glucosamine 6-phosphate + H2O = beta-D-fructose 6-phosphate + NH4(+). The protein operates within amino-sugar metabolism; N-acetylneuraminate degradation; D-fructose 6-phosphate from N-acetylneuraminate: step 5/5. Its function is as follows. Catalyzes the reversible isomerization-deamination of glucosamine 6-phosphate (GlcN6P) to form fructose 6-phosphate (Fru6P) and ammonium ion. The sequence is that of Glucosamine-6-phosphate deaminase from Shouchella clausii (strain KSM-K16) (Alkalihalobacillus clausii).